Reading from the N-terminus, the 462-residue chain is Aquaporin-1 (462 aa).

A compositionally biased stretch (polar residues) spans 1-11 (MTMRSPLTNDH). Residues 1-24 (MTMRSPLTNDHPQPLRASPLSEHD) form a disordered region. At 1-146 (MTMRSPLTND…KWMNSDWKNH (146 aa)) the chain is on the cytoplasmic side. The chain crosses the membrane as a helical span at residues 147–167 (IVAVIGELIGTSLFLFFGYAG). Residues 168-182 (IEVAKLQGREPPDLE) are Extracellular-facing. The chain crosses the membrane as a helical span at residues 183–203 (VLFYISATFGASLMVTAWIFF). The Cytoplasmic portion of the chain corresponds to 204–229 (RISGGLFNPAVTLALAILKAVSPIRA). An NPA 1 motif is present at residues 211-213 (NPA). A helical membrane pass occupies residues 230–250 (FLLVITQLGASCLAAILVQEI). Topologically, residues 251–269 (FPKQLDVATTLGSGTSMGQ) are extracellular. A helical transmembrane segment spans residues 270-290 (GFVIEAITTAALIFTIIMLAV). Over 291-296 (EKHKAT) the chain is Cytoplasmic. A helical membrane pass occupies residues 297–317 (FVAPIGIGLALFVAHMVAVPF). Residues 318–341 (TGASLNPARSFGPSAIVWNFPREH) are Extracellular-facing. Positions 323-325 (NPA) match the NPA 2 motif. Residues 342–362 (WIYWVGPILGAGLAVLFFRLI) form a helical membrane-spanning segment. Residues 363-462 (KLMEYEMANP…WRRQQYRNVV (100 aa)) lie on the Cytoplasmic side of the membrane. Residues 407–433 (GKSWYRDDSSSGSMRRKESVNSFTGGR) are disordered. Residues 410 to 425 (WYRDDSSSGSMRRKES) are compositionally biased toward basic and acidic residues.

The protein belongs to the MIP/aquaporin (TC 1.A.8) family.

The protein localises to the membrane. It catalyses the reaction H2O(in) = H2O(out). Functionally, water channel required to facilitate the transport of water across membranes. Involved in conidiation. In Botryotinia fuckeliana (strain B05.10) (Noble rot fungus), this protein is Aquaporin-1.